A 778-amino-acid polypeptide reads, in one-letter code: Semaphorin-3ab (778 aa).

The N-terminal stretch at 1–17 (MDYLWWIVLLIWTLIAP) is a signal peptide. A Sema domain is found at 32 to 515 (RLKPSYKEML…SAIGVSQMPL (484 aa)). N-linked (GlcNAc...) asparagine glycosylation occurs at N54. A disulfide bond links C105 and C116. The N-linked (GlcNAc...) asparagine glycan is linked to N127. 4 disulfides stabilise this stretch: C134–C143, C270–C382, C294–C342, and C518–C536. In terms of domain architecture, Ig-like C2-type spans 579-668 (GEAGLLDKTV…FIQTLLRLTL (90 aa)). N593 is a glycosylation site (N-linked (GlcNAc...) asparagine). An intrachain disulfide couples C652 to C716. The tract at residues 727 to 778 (RRQKANLLHASQSHTSQILHSSQSHAKWKLLQENKKGRNRRTHEMQRAPRSV) is disordered. The span at 735-751 (HASQSHTSQILHSSQSH) shows a compositional bias: polar residues. Residues 756 to 778 (LLQENKKGRNRRTHEMQRAPRSV) are compositionally biased toward basic and acidic residues.

It belongs to the semaphorin family. As to expression, expressed in rhombomeres three and five, and in the posterior half of newly formed somites which is avoided by ventrally extending motor axons.

Its subcellular location is the secreted. Might normally influence the midsegmental pathway choice of the ventrally extending motor axons by contributing to a repulsive domain in the posterior somite. The polypeptide is Semaphorin-3ab (sema3ab) (Danio rerio (Zebrafish)).